The primary structure comprises 413 residues: Multidrug resistance protein MdtA (413 aa).

The first 20 residues, Met1–Ala20, serve as a signal peptide directing secretion. 2 disordered regions span residues Ser31 to Pro57 and Glu391 to Ala413. The segment covering Ala397–Ala413 has biased composition (basic and acidic residues).

Belongs to the membrane fusion protein (MFP) (TC 8.A.1) family. Part of a tripartite efflux system composed of MdtA, MdtB and MdtC.

It localises to the cell inner membrane. This Salmonella paratyphi C (strain RKS4594) protein is Multidrug resistance protein MdtA.